The sequence spans 358 residues: UPF0283 membrane protein PM0909 (358 aa).

The next 3 helical transmembrane spans lie at 62 to 82 (LALT…QWLV), 90 to 110 (WIYF…VSSL), and 213 to 233 (ALEA…MFFL).

It belongs to the UPF0283 family.

It is found in the cell inner membrane. The sequence is that of UPF0283 membrane protein PM0909 from Pasteurella multocida (strain Pm70).